The chain runs to 213 residues: MGKLLTMAMPKGRIFEEAAGLLRQAGYRLPEEFEDSRKLIIDVPEENLRFILAKPMDVTTYVEHGVADVGIAGKDVMLEEERDVYEVLDLNISKCHLAVAGLPNTDWSGVAPRIATKYPNVASSYFREQGEQVEIIKLNGSIELAPLIGLADRIVDIVSTGQTLKENGLVETEHICDITSRFIVNPVSYRMKDDVIDEMASRLSLVVEGETAK.

It belongs to the ATP phosphoribosyltransferase family. Short subfamily. In terms of assembly, heteromultimer composed of HisG and HisZ subunits.

The protein localises to the cytoplasm. It catalyses the reaction 1-(5-phospho-beta-D-ribosyl)-ATP + diphosphate = 5-phospho-alpha-D-ribose 1-diphosphate + ATP. It functions in the pathway amino-acid biosynthesis; L-histidine biosynthesis; L-histidine from 5-phospho-alpha-D-ribose 1-diphosphate: step 1/9. In terms of biological role, catalyzes the condensation of ATP and 5-phosphoribose 1-diphosphate to form N'-(5'-phosphoribosyl)-ATP (PR-ATP). Has a crucial role in the pathway because the rate of histidine biosynthesis seems to be controlled primarily by regulation of HisG enzymatic activity. This Bacillus subtilis (strain 168) protein is ATP phosphoribosyltransferase (hisG).